The sequence spans 750 residues: Photosystem I P700 chlorophyll a apoprotein A1 (750 aa).

The next 8 helical transmembrane spans lie at 70 to 93 (VFSA…FHGA), 156 to 179 (LYCT…FHYH), 195 to 219 (LNHH…HVSL), 291 to 309 (IAHH…GHMY), 346 to 369 (WHAQ…HHMY), 385 to 411 (LSLF…IFMV), 433 to 455 (AIIS…LYIH), and 531 to 549 (FLVH…LILL). Cys573 and Cys582 together coordinate [4Fe-4S] cluster. Helical transmembrane passes span 589–610 (HVFL…HFSW) and 664–686 (LSAY…MFLF). His675 serves as a coordination point for chlorophyll a'. Chlorophyll a-binding residues include Met683 and Tyr691. Trp692 is a binding site for phylloquinone. Residues 724 to 744 (AVGVTHYLLGGIATTWAFFLA) traverse the membrane as a helical segment.

This sequence belongs to the PsaA/PsaB family. In terms of assembly, the PsaA/B heterodimer binds the P700 chlorophyll special pair and subsequent electron acceptors. PSI consists of a core antenna complex that captures photons, and an electron transfer chain that converts photonic excitation into a charge separation. The eukaryotic PSI reaction center is composed of at least 11 subunits. P700 is a chlorophyll a/chlorophyll a' dimer, A0 is one or more chlorophyll a, A1 is one or both phylloquinones and FX is a shared 4Fe-4S iron-sulfur center. is required as a cofactor.

The protein resides in the plastid. It is found in the chloroplast thylakoid membrane. It catalyses the reaction reduced [plastocyanin] + hnu + oxidized [2Fe-2S]-[ferredoxin] = oxidized [plastocyanin] + reduced [2Fe-2S]-[ferredoxin]. Its function is as follows. PsaA and PsaB bind P700, the primary electron donor of photosystem I (PSI), as well as the electron acceptors A0, A1 and FX. PSI is a plastocyanin-ferredoxin oxidoreductase, converting photonic excitation into a charge separation, which transfers an electron from the donor P700 chlorophyll pair to the spectroscopically characterized acceptors A0, A1, FX, FA and FB in turn. Oxidized P700 is reduced on the lumenal side of the thylakoid membrane by plastocyanin. The protein is Photosystem I P700 chlorophyll a apoprotein A1 of Daucus carota (Wild carrot).